Reading from the N-terminus, the 248-residue chain is Tyrosine recombinase XerD-like (248 aa).

Residues 1-72 form the Core-binding (CB) domain; the sequence is MKSYIEPFIA…TANQFLYYLY (72 aa). Residues 85–248 enclose the Tyr recombinase domain; sequence DTMKVMRTEK…PVTLEKYYKS (164 aa). Catalysis depends on residues K149 and R213. Y245 functions as the O-(3'-phospho-DNA)-tyrosine intermediate in the catalytic mechanism.

It belongs to the 'phage' integrase family. XerD-like subfamily.

The protein resides in the cytoplasm. Its function is as follows. Putative tyrosine recombinase. Not involved in the cutting and rejoining of the recombining DNA molecules on dif(SL) site. The protein is Tyrosine recombinase XerD-like of Streptococcus pyogenes serotype M18 (strain MGAS8232).